Here is a 126-residue protein sequence, read N- to C-terminus: Holo-[acyl-carrier-protein] synthase (126 aa).

Residues D9 and E58 each contribute to the Mg(2+) site.

The protein belongs to the P-Pant transferase superfamily. AcpS family. Mg(2+) serves as cofactor.

The protein localises to the cytoplasm. It carries out the reaction apo-[ACP] + CoA = holo-[ACP] + adenosine 3',5'-bisphosphate + H(+). Its function is as follows. Transfers the 4'-phosphopantetheine moiety from coenzyme A to a Ser of acyl-carrier-protein. In Escherichia coli (strain ATCC 8739 / DSM 1576 / NBRC 3972 / NCIMB 8545 / WDCM 00012 / Crooks), this protein is Holo-[acyl-carrier-protein] synthase.